Reading from the N-terminus, the 1313-residue chain is Kinesin-like protein KIN-12B (1313 aa).

A disordered region spans residues 1 to 74 (MKHFMMPRNA…PPRPPSSNPL (74 aa)). The segment covering 17–26 (ESQSPNPSLT) has biased composition (polar residues). Positions 96–431 (GVKVIVRMKP…LRFAQRAKAI (336 aa)) constitute a Kinesin motor domain. 170-177 (GQTGSGKT) is a binding site for ATP. Microtubules-binding regions lie at residues 298–302 (SSRSH), 331–337 (VDLAGSE), and 380–384 (HIPYR). Residues 429–467 (KAIQNKAIVNEVMQDDVNFLREVIRQLRDELQRVKDDKG) are neck. The interval 685–709 (ESASPKIRNSRKSLRTTSMSTASQK) is disordered. The segment covering 699–708 (RTTSMSTASQ) has biased composition (polar residues). Coiled coils occupy residues 932 to 1003 (LDEE…YTDS), 1062 to 1130 (AEEL…RIRE), and 1167 to 1241 (EKEV…TEIS).

It belongs to the TRAFAC class myosin-kinesin ATPase superfamily. Kinesin family. KIN-12 subfamily. Homodimer and heterodimer with KIN12A. Interacts with TIO.

It localises to the cytoplasm. The protein localises to the cytoskeleton. Its subcellular location is the phragmoplast. In terms of biological role, plus-end directed kinesin-like motor enzyme that plays a critical role in the organization of phragmoplast microtubules during cytokinesis. Constitutes a signaling module in association with serine/threonine-protein kinase TIO that is required to support phragmoplast expansion and cell-plate growth in plant cells. The chain is Kinesin-like protein KIN-12B from Arabidopsis thaliana (Mouse-ear cress).